We begin with the raw amino-acid sequence, 38 residues long: Photosystem II reaction center protein L (38 aa).

Residues 17–37 traverse the membrane as a helical segment; the sequence is SLFWGLLLIFVLAVLFSSYFF.

It belongs to the PsbL family. As to quaternary structure, PSII is composed of 1 copy each of membrane proteins PsbA, PsbB, PsbC, PsbD, PsbE, PsbF, PsbH, PsbI, PsbJ, PsbK, PsbL, PsbM, PsbT, PsbX, PsbY, PsbZ, Psb30/Ycf12, at least 3 peripheral proteins of the oxygen-evolving complex and a large number of cofactors. It forms dimeric complexes.

Its subcellular location is the plastid. The protein resides in the chloroplast thylakoid membrane. Its function is as follows. One of the components of the core complex of photosystem II (PSII). PSII is a light-driven water:plastoquinone oxidoreductase that uses light energy to abstract electrons from H(2)O, generating O(2) and a proton gradient subsequently used for ATP formation. It consists of a core antenna complex that captures photons, and an electron transfer chain that converts photonic excitation into a charge separation. This subunit is found at the monomer-monomer interface and is required for correct PSII assembly and/or dimerization. The protein is Photosystem II reaction center protein L of Rhodomonas salina (Cryptomonas salina).